We begin with the raw amino-acid sequence, 231 residues long: PIAGSMVLAAILLKLGGYGIIRIMQIMPMTKTDMFLPFLVLALWGAILANLTCLQQTDLKSLIAYSSISHMGLVVAAIIIQTPWGLSGAMALMIAHGFTSSALFCLANTTYERTHTRILILTRGFHNILPMATTWWLLTNLMNIATPPTMNFTSELLIMSTLFNWCPTTIILLGMSMLITASYSLHMFLSTQMGYPLLNNQTEPTHTREHLLMILHIVPLMMISMKPELVI.

6 consecutive transmembrane segments (helical) span residues 1–21, 34–54, 63–85, 89–111, 118–138, and 169–189; these read PIAG…YGII, MFLP…LTCL, IAYS…TPWG, AMAL…NTTY, ILIL…WWLL, and TIIL…HMFL.

This sequence belongs to the complex I subunit 4 family.

The protein localises to the mitochondrion membrane. The enzyme catalyses a ubiquinone + NADH + 5 H(+)(in) = a ubiquinol + NAD(+) + 4 H(+)(out). Core subunit of the mitochondrial membrane respiratory chain NADH dehydrogenase (Complex I) that is believed to belong to the minimal assembly required for catalysis. Complex I functions in the transfer of electrons from NADH to the respiratory chain. The immediate electron acceptor for the enzyme is believed to be ubiquinone. The sequence is that of NADH-ubiquinone oxidoreductase chain 4 (MT-ND4) from Trimeresurus cantori (Cantor's pit viper).